Here is a 266-residue protein sequence, read N- to C-terminus: Undecaprenyl-diphosphatase (266 aa).

The next 8 helical transmembrane spans lie at 1–21, 43–63, 83–103, 114–134, 144–164, 186–206, 219–239, and 245–265; these read MNIF…FLPI, FDVV…QAMI, SKLA…GMIF, VEII…ASWF, TISW…LIPG, IQFA…LILI, LLAM…VFFI, and VGMM…FFFI.

Belongs to the UppP family.

Its subcellular location is the cell inner membrane. It catalyses the reaction di-trans,octa-cis-undecaprenyl diphosphate + H2O = di-trans,octa-cis-undecaprenyl phosphate + phosphate + H(+). Catalyzes the dephosphorylation of undecaprenyl diphosphate (UPP). Confers resistance to bacitracin. The polypeptide is Undecaprenyl-diphosphatase (Ruthia magnifica subsp. Calyptogena magnifica).